The primary structure comprises 143 residues: Interleukin-3 (143 aa).

The signal sequence occupies residues 1–19 (MSRLPVLLLLHLLVSPGLQ). A disulfide bridge connects residues Cys-35 and Cys-103. The N-linked (GlcNAc...) asparagine glycan is linked to Asn-89.

It belongs to the IL-3 family. In terms of assembly, monomer. As to expression, activated T-cells, mast cells, natural killer cells.

The protein localises to the secreted. Granulocyte/macrophage colony-stimulating factors are cytokines that act in hematopoiesis by controlling the production, differentiation, and function of 2 related white cell populations of the blood, the granulocytes and the monocytes-macrophages. Functionally, this CSF induces granulocytes, macrophages, mast cells, stem cells, erythroid cells, eosinophils and megakaryocytes. The sequence is that of Interleukin-3 (IL3) from Macaca mulatta (Rhesus macaque).